We begin with the raw amino-acid sequence, 805 residues long: MESVEKEDSLTAPFEFATTASTDAANAPTTFPVEAPPLEEEEVIIEQDPGFVSEDDEDRSVPTEDKKQDQDDAEANEEQVGRGDQRHGDYLDVGDDVLLKHLQRQCAIICDALQERSDVPLAIADVSLAYERHLFSPRVPPKRQENGTCEPNPRLNFYPVFAVPEVLATYHIFFQNCKIPLSCRANRSRADKQLALRQGAVIPDIASLDEVPKIFEGLGRDEKRAANALQQENSENESHCGVLVELEGDNARLAVLKRSIEVTHFAYPALNLPPKVMSTVMSELIVRRARPLERDANLQEQTEEGLPAVGDEQLARWLETREPADLEERRKLMMAAVLVTVELECMQRFFADPEMQRKLEETLHYTFRQGYVRQACKISNVELCNLVSYLGILHENRLGQNVLHSTLKGEARRDYVRDCVYLFLCYTWQTAMGVWQQCLEERNLKELQKLLKQNLKDLWTAFNERSVAAHLADIIFPERLLKTLQQGLPDFTSQSMLQNFRNFILERSGILPATCCALPSDFVPIKYRECPPPLWGHCYLLQLANYLAYHSDIMEDVSGDGLLECHCRCNLCTPHRSLVCNSQLLSESQIIGTFELQGPSPDEKSAAPGLKLTPGLWTSAYLRKFVPEDYHAHEIRFYEDQSRPPNAELTACVITQGHILGQLQAINKARQEFLLRKGRGVYLDPQSGEELNPIPPPPQPYQQPRALASQDGTQKEAAAAAAATHGRGGILGQSGRGGFGRGGGDDGRLGQPRRSFRGRRGVRRNTVTLGRIPLAGAPEIGNRSQHRYNLRSSGAAGTACSPTQP.

The tract at residues 1–88 (MESVEKEDSL…QVGRGDQRHG (88 aa)) is disordered. The span at 18–29 (TTASTDAANAPT) shows a compositional bias: polar residues. Composition is skewed to basic and acidic residues over residues 59-70 (RSVPTEDKKQDQ) and 79-88 (QVGRGDQRHG). Residues 280-345 (VMSELIVRRA…AVLVTVELEC (66 aa)) form a binding to host EIF4G region. In terms of domain architecture, RRM spans 348 to 466 (RFFADPEMQR…DLWTAFNERS (119 aa)). A phosphotyrosine; by host mark is found at Tyr365 and Tyr682. Positions 684–805 (DPQSGEELNP…AGTACSPTQP (122 aa)) are disordered. Positions 726 to 742 (GRGGILGQSGRGGFGRG) are enriched in gly residues. A compositionally biased stretch (basic residues) spans 754–763 (RSFRGRRGVR).

The protein belongs to the adenoviridae shutoff protein family. In terms of assembly, monomer. Interacts with hexon protein; this interaction allows chaperoning and trimerization of hexon proteins. Interacts (via N-terminus) with host initiation factor EIF4G (via C-terminus). Interacts (via RRM domain) with viral mRNAs that contain the tripartite leader; this interaction allows ribosome shunting and expression of viral late mRNAs. In terms of processing, might be cleaved by the viral protease. Post-translationally, phosphorylated. Tyrosine phosphorylation enhances preferential binding to tripartite leader mRNAs and allows ribosome shunting. Methylated. Asymmetric dimethylation by host PRMT1 of the Arg/Gly-rich region may regulate shutoff protein binding to hexon and promote the capsid assembly in the nucleus.

The protein resides in the host cytoplasm. In terms of biological role, protein that inhibits host translation while promoting late viral translation by ribosome shunting. Blocks host cap-dependent translation by binding to eIF4G, displacing MKNK1 from cap initiation complexes and preventing EIF4E phosphorylation. Binds to the tripartite leader sequence of viral late mRNAs and recruits host eIF4G, PABPC1/poly-A binding protein and 40S ribosomes subunits on viral mRNAs, allowing ribosome shunting and efficient translation of late viral mRNAs even though conventional translation via ribosome scanning from the cap has been shut off in the host cell. During assembly, acts as a chaperone protein that helps hexon proteins assembly into trimers. The chain is Shutoff protein from Homo sapiens (Human).